Reading from the N-terminus, the 440-residue chain is Xylose isomerase (440 aa).

Active-site residues include H101 and D104. 7 residues coordinate Mg(2+): E232, E268, H271, D296, D307, D309, and D339.

Belongs to the xylose isomerase family. As to quaternary structure, homotetramer. The cofactor is Mg(2+).

The protein resides in the cytoplasm. The catalysed reaction is alpha-D-xylose = alpha-D-xylulofuranose. The sequence is that of Xylose isomerase from Salmonella dublin (strain CT_02021853).